Reading from the N-terminus, the 80-residue chain is Sulfur carrier protein TusA (80 aa).

The Cysteine persulfide intermediate role is filled by cysteine 17.

The protein belongs to the sulfur carrier protein TusA family.

Its subcellular location is the cytoplasm. Functionally, sulfur carrier protein which probably makes part of a sulfur-relay system. This is Sulfur carrier protein TusA from Pseudomonas entomophila (strain L48).